A 79-amino-acid chain; its full sequence is MGSLSIWHWIVVIAVVLLLFGRGKISDLMGDVAQGIKSFKKGLQDDEKTAEKPDAVKSLDHNATTGTPPNRTDVGSKAV.

The helical transmembrane segment at Met1–Gly21 threads the bilayer. Positions Gly42–Asp60 are enriched in basic and acidic residues. A disordered region spans residues Gly42–Val79. Polar residues predominate over residues His61–Asn70.

It belongs to the TatA/E family. The Tat system comprises two distinct complexes: a TatABC complex, containing multiple copies of TatA, TatB and TatC subunits, and a separate TatA complex, containing only TatA subunits. Substrates initially bind to the TatABC complex, which probably triggers association of the separate TatA complex to form the active translocon.

It is found in the cell inner membrane. Its function is as follows. Part of the twin-arginine translocation (Tat) system that transports large folded proteins containing a characteristic twin-arginine motif in their signal peptide across membranes. TatA could form the protein-conducting channel of the Tat system. This chain is Sec-independent protein translocase protein TatA, found in Rhodopseudomonas palustris (strain HaA2).